The chain runs to 264 residues: tRNA (guanine-N(1)-)-methyltransferase (264 aa).

Residues Gly-125 and 145–150 (LGDFVL) each bind S-adenosyl-L-methionine.

It belongs to the RNA methyltransferase TrmD family. As to quaternary structure, homodimer.

The protein localises to the cytoplasm. It catalyses the reaction guanosine(37) in tRNA + S-adenosyl-L-methionine = N(1)-methylguanosine(37) in tRNA + S-adenosyl-L-homocysteine + H(+). Its function is as follows. Specifically methylates guanosine-37 in various tRNAs. This chain is tRNA (guanine-N(1)-)-methyltransferase, found in Burkholderia mallei (strain NCTC 10247).